The primary structure comprises 523 residues: Type 2 DNA topoisomerase 6 subunit B (523 aa).

ATP-binding positions include Asn-48, Asp-80, 101 to 102, 110 to 117, and Lys-436; these read SK and GQQGLGCS.

The protein belongs to the TOP6B family. Homodimer. Heterotetramer of two Top6A and two Top6B chains.

The enzyme catalyses ATP-dependent breakage, passage and rejoining of double-stranded DNA.. In terms of biological role, relaxes both positive and negative superturns and exhibits a strong decatenase activity. In Methanothermobacter thermautotrophicus (strain ATCC 29096 / DSM 1053 / JCM 10044 / NBRC 100330 / Delta H) (Methanobacterium thermoautotrophicum), this protein is Type 2 DNA topoisomerase 6 subunit B.